The following is an 828-amino-acid chain: Periplasmic nitrate reductase (828 aa).

The segment at residues 1-31 is a signal peptide (tat-type signal); it reads MKLSRRSFMKANAVAAAAAAAGLSVPGVARA. One can recognise a 4Fe-4S Mo/W bis-MGD-type domain in the interval 39-95; sequence IKWDKAPCRFCGTGCGVLVGTQQGRVVACQGDPDAPVNRGLNCIKGYFLPKIMYGKD. 4 residues coordinate [4Fe-4S] cluster: Cys-46, Cys-49, Cys-53, and Cys-81. Mo-bis(molybdopterin guanine dinucleotide)-binding positions include Lys-83, Gln-150, Asn-175, Cys-179, 212 to 219, 243 to 247, 262 to 264, Met-372, Gln-376, Asn-482, 508 to 509, Lys-531, Asp-558, and 718 to 727; these read WGSNMAEM, STFQH, QSD, SD, and TGRVLEHWHT. Phe-794 contacts substrate. Residues Asn-802 and Lys-819 each coordinate Mo-bis(molybdopterin guanine dinucleotide).

Belongs to the prokaryotic molybdopterin-containing oxidoreductase family. NasA/NapA/NarB subfamily. In terms of assembly, component of the periplasmic nitrate reductase NapAB complex composed of NapA and NapB. The cofactor is [4Fe-4S] cluster. Mo-bis(molybdopterin guanine dinucleotide) is required as a cofactor. Post-translationally, predicted to be exported by the Tat system. The position of the signal peptide cleavage has not been experimentally proven.

Its subcellular location is the periplasm. The catalysed reaction is 2 Fe(II)-[cytochrome] + nitrate + 2 H(+) = 2 Fe(III)-[cytochrome] + nitrite + H2O. In terms of biological role, catalytic subunit of the periplasmic nitrate reductase complex NapAB. Receives electrons from NapB and catalyzes the reduction of nitrate to nitrite. This is Periplasmic nitrate reductase from Salmonella paratyphi A (strain ATCC 9150 / SARB42).